A 271-amino-acid polypeptide reads, in one-letter code: Cobalt import ATP-binding protein CbiO (271 aa).

Residues 2–236 enclose the ABC transporter domain; sequence LATSDLWFRY…TEAMEHAGLT (235 aa). Position 34 to 41 (34 to 41) interacts with ATP; sequence GANGCGKS.

This sequence belongs to the ABC transporter superfamily. Cobalt importer (TC 3.A.1.18.1) family. In terms of assembly, forms an energy-coupling factor (ECF) transporter complex composed of an ATP-binding protein (A component, CbiO), a transmembrane protein (T component, CbiQ) and 2 possible substrate-capture proteins (S components, CbiM and CbiN) of unknown stoichimetry.

It localises to the cell inner membrane. It participates in cofactor biosynthesis; adenosylcobalamin biosynthesis. Part of the energy-coupling factor (ECF) transporter complex CbiMNOQ involved in cobalt import. Presumably responsible for energy coupling to the transport system. This chain is Cobalt import ATP-binding protein CbiO, found in Salmonella paratyphi A (strain ATCC 9150 / SARB42).